The primary structure comprises 387 residues: MERVYLDNNATTRLAPEALQAMLPFLTEEFGNPSSLHGQGRAPARALMAARRAVLELIGAEADSEILFTSGGTEADTTAIRSALAADPSRREIVTSTVEHAAVLALCDHLERQEGVTVHRIPVDGDGRLDIEAYRAALSPRVALVSLMWANNETGTVFPVEGLAELAHRAGALFHTDAVQAVGKVPIVLRGTEIDMLSLSAHKFHGPKGVGALWLRKGVPFQPLIRGGRQQRGHRAGTENIPGIVGLGRAAELALGGDHGAVRLLRDRLEQGILARVPKARVLGDPLDRLPNTSCVAFDFAEGEAIVMLLDRAGICVSSGAACASGAMEPSHVIRAMKVPFTAAHGAIRFSLSHWTTAAEIDRLLEVLPPIVDQLRALSPFGAEEVK.

Pyridoxal 5'-phosphate is bound by residues 72–73, N152, Q180, and 200–202; these read GT and SAH. N6-(pyridoxal phosphate)lysine is present on K203. T238 provides a ligand contact to pyridoxal 5'-phosphate. Residue C323 is the Cysteine persulfide intermediate of the active site. C323 serves as a coordination point for [2Fe-2S] cluster.

It belongs to the class-V pyridoxal-phosphate-dependent aminotransferase family. NifS/IscS subfamily. Homodimer. It depends on pyridoxal 5'-phosphate as a cofactor.

It catalyses the reaction (sulfur carrier)-H + L-cysteine = (sulfur carrier)-SH + L-alanine. In terms of biological role, catalyzes the removal of elemental sulfur atoms from cysteine to produce alanine. Seems to participate in the biosynthesis of the nitrogenase metalloclusters by providing the inorganic sulfur required for the Fe-S core formation. The chain is Cysteine desulfurase from Cereibacter sphaeroides (Rhodobacter sphaeroides).